A 212-amino-acid polypeptide reads, in one-letter code: Glycerol-3-phosphate acyltransferase (212 aa).

4 helical membrane-spanning segments follow: residues 3–23 (ILLA…VVVS), 78–98 (DVAV…PVFF), 115–135 (AVHP…AFFF), and 155–177 (FLFG…LLVW).

This sequence belongs to the PlsY family. As to quaternary structure, probably interacts with PlsX.

The protein localises to the cell inner membrane. The catalysed reaction is an acyl phosphate + sn-glycerol 3-phosphate = a 1-acyl-sn-glycero-3-phosphate + phosphate. It functions in the pathway lipid metabolism; phospholipid metabolism. In terms of biological role, catalyzes the transfer of an acyl group from acyl-phosphate (acyl-PO(4)) to glycerol-3-phosphate (G3P) to form lysophosphatidic acid (LPA). This enzyme utilizes acyl-phosphate as fatty acyl donor, but not acyl-CoA or acyl-ACP. The polypeptide is Glycerol-3-phosphate acyltransferase (Burkholderia lata (strain ATCC 17760 / DSM 23089 / LMG 22485 / NCIMB 9086 / R18194 / 383)).